We begin with the raw amino-acid sequence, 154 residues long: Low molecular weight protein-tyrosine-phosphatase PtpA (154 aa).

C8 acts as the Nucleophile in catalysis. The active site involves R14. The Proton donor role is filled by D120.

The protein belongs to the low molecular weight phosphotyrosine protein phosphatase family.

The enzyme catalyses O-phospho-L-tyrosyl-[protein] + H2O = L-tyrosyl-[protein] + phosphate. Functionally, dephosphorylates the phosphotyrosine-containing proteins. The chain is Low molecular weight protein-tyrosine-phosphatase PtpA (ptpA) from Staphylococcus saprophyticus subsp. saprophyticus (strain ATCC 15305 / DSM 20229 / NCIMB 8711 / NCTC 7292 / S-41).